Consider the following 296-residue polypeptide: Beta-lactamase (296 aa).

An N-terminal signal peptide occupies residues 1–21; sequence MKAYFIAILTLFTCIATVVRA. The Acyl-ester intermediate role is filled by serine 66. Residue 235–237 coordinates substrate; that stretch reads KTG.

Belongs to the class-A beta-lactamase family.

The catalysed reaction is a beta-lactam + H2O = a substituted beta-amino acid. This is Beta-lactamase (cblA) from Bacteroides uniformis.